Here is a 677-residue protein sequence, read N- to C-terminus: Methionine--tRNA ligase (677 aa).

A 'HIGH' region motif is present at residues 15-25 (PYANGSIHLGH). Positions 146, 149, 159, and 162 each coordinate Zn(2+). Residues 333–337 (KMSKS) carry the 'KMSKS' region motif. Lys336 provides a ligand contact to ATP. One can recognise a tRNA-binding domain in the interval 575-677 (DFAKIDLRVA…DGAKPGQQVK (103 aa)).

This sequence belongs to the class-I aminoacyl-tRNA synthetase family. MetG type 1 subfamily. As to quaternary structure, homodimer. It depends on Zn(2+) as a cofactor.

The protein resides in the cytoplasm. It catalyses the reaction tRNA(Met) + L-methionine + ATP = L-methionyl-tRNA(Met) + AMP + diphosphate. Its function is as follows. Is required not only for elongation of protein synthesis but also for the initiation of all mRNA translation through initiator tRNA(fMet) aminoacylation. In Salmonella paratyphi A (strain AKU_12601), this protein is Methionine--tRNA ligase.